Consider the following 284-residue polypeptide: Esterase alnB (284 aa).

Catalysis depends on charge relay system residues Ser-93, Asp-226, and His-255.

It belongs to the LovG family.

It functions in the pathway polyketide biosynthesis. Esterase; part of the gene cluster that mediates the biosynthesis of asperlin, a polyketide showing anti-inflammatory, antitumor and antibiotic activities. The first step of the asperlin biosynthesis is the production of the intermediate 2,4,6-octatrienoic acid by the highly redusing polyketide synthase alnA with cleavage of the PKS product by the esterase alnB. 2,4,6-octatrienoic acid is further converted to asperlin via several steps involving the remaining enzymes from the cluster. The polypeptide is Esterase alnB (Emericella nidulans (strain FGSC A4 / ATCC 38163 / CBS 112.46 / NRRL 194 / M139) (Aspergillus nidulans)).